A 267-amino-acid polypeptide reads, in one-letter code: 2-keto-3-deoxy-L-rhamnonate aldolase (267 aa).

Histidine 49 acts as the Proton acceptor in catalysis. Substrate is bound at residue glutamine 151. Position 153 (glutamate 153) interacts with Mg(2+). Substrate-binding residues include alanine 178 and aspartate 179. Aspartate 179 is a Mg(2+) binding site.

It belongs to the HpcH/HpaI aldolase family. KDR aldolase subfamily. In terms of assembly, homohexamer. Requires Mg(2+) as cofactor.

It catalyses the reaction 2-dehydro-3-deoxy-L-rhamnonate = (S)-lactaldehyde + pyruvate. Catalyzes the reversible retro-aldol cleavage of 2-keto-3-deoxy-L-rhamnonate (KDR) to pyruvate and lactaldehyde. This chain is 2-keto-3-deoxy-L-rhamnonate aldolase, found in Salmonella agona (strain SL483).